A 201-amino-acid polypeptide reads, in one-letter code: Protease (201 aa).

Catalysis depends on residues His56, Asp73, and Cys121.

This sequence belongs to the peptidase C5 family. As to quaternary structure, interacts with protease cofactor pVI-C; this interaction is necessary for protease activation.

The protein localises to the virion. Its subcellular location is the host nucleus. It catalyses the reaction Cleaves proteins of the adenovirus and its host cell at two consensus sites: -Yaa-Xaa-Gly-Gly-|-Xaa- and -Yaa-Xaa-Gly-Xaa-|-Gly- (in which Yaa is Met, Ile or Leu, and Xaa is any amino acid).. With respect to regulation, requires DNA and protease cofactor for maximal activation. Inside nascent virions, becomes partially activated by binding to the viral DNA, allowing it to cleave the cofactor that binds to the protease and fully activates it. Actin, like the viral protease cofactor, seems to act as a cofactor in the cleavage of cytokeratin 18 and of actin itself. Cleaves viral precursor proteins (pTP, pIIIa, pVI, pVII, pVIII, and pX) inside newly assembled particles giving rise to mature virions. Protease complexed to its cofactor slides along the viral DNA to specifically locate and cleave the viral precursors. Mature virions have a weakened organization compared to the unmature virions, thereby facilitating subsequent uncoating. Without maturation, the particle lacks infectivity and is unable to uncoat. Late in adenovirus infection, in the cytoplasm, may participate in the cytoskeleton destruction. Cleaves host cell cytoskeletal keratins K7 and K18. This chain is Protease, found in Homo sapiens (Human).